Here is a 188-residue protein sequence, read N- to C-terminus: Peptidyl-tRNA hydrolase (188 aa).

A tRNA-binding site is contributed by tyrosine 14. Catalysis depends on histidine 19, which acts as the Proton acceptor. TRNA contacts are provided by tyrosine 64, asparagine 66, and asparagine 113.

It belongs to the PTH family. As to quaternary structure, monomer.

The protein resides in the cytoplasm. The catalysed reaction is an N-acyl-L-alpha-aminoacyl-tRNA + H2O = an N-acyl-L-amino acid + a tRNA + H(+). Hydrolyzes ribosome-free peptidyl-tRNAs (with 1 or more amino acids incorporated), which drop off the ribosome during protein synthesis, or as a result of ribosome stalling. Its function is as follows. Catalyzes the release of premature peptidyl moieties from peptidyl-tRNA molecules trapped in stalled 50S ribosomal subunits, and thus maintains levels of free tRNAs and 50S ribosomes. The chain is Peptidyl-tRNA hydrolase from Chloroflexus aurantiacus (strain ATCC 29364 / DSM 637 / Y-400-fl).